The chain runs to 413 residues: CinA-like protein (413 aa).

It belongs to the CinA family.

The chain is CinA-like protein from Geobacter sulfurreducens (strain ATCC 51573 / DSM 12127 / PCA).